The primary structure comprises 512 residues: MKKTTLLVILDGWGYSDSDYFNAIKNANTPTWDSIWQEFPKTLINASSLEVGLPRSQMGNSEVGHVNIGCGRVVYQELTKIDKAIEEKTFGDNKAICAAIDNVIKNDSNLHLIGLLSPGGVHSHEEHIFEMIKIAKQKGIKRLYLHAFLDGRDTPPRSAEKSIKKADKLLQDLNLGYIASVCGRYYAMDRDNRWDRVEKAYNAIVNANADFIYDSALEALEQSYARDQSDEFVIPTCIKKDGHLVKVQDNDSVIFMNFRADRAREISHAFTDESFDHFPRKKHLNINFTTLTEYDSKLKCAVAFPPEQPINTLGEVLMKNHKTQLRIAETEKYPHVTFFFNGGREEQFEGEDRILIPSPKVATYDLQPEMSAPEVTDKLVAAINSGKYDCIVCNYANSDMVGHTGNYEAAMQAIEYLDKCIARLKDAILEHDGNMFITADHGNADMMVNPETQKPHTAHTTNLVPFIYVGHKKAQVALEHGKLSDIAPTLLNVMGIAQPKEMTGKTIFNFEK.

2 residues coordinate Mn(2+): Asp11 and Ser61. The Phosphoserine intermediate role is filled by Ser61. Substrate is bound by residues His122, 152–153 (RD), Arg184, Arg190, 259–262 (RADR), and Lys332. Mn(2+) contacts are provided by Asp399, His403, Asp440, His441, and His459.

Belongs to the BPG-independent phosphoglycerate mutase family. In terms of assembly, monomer. The cofactor is Mn(2+).

It carries out the reaction (2R)-2-phosphoglycerate = (2R)-3-phosphoglycerate. The protein operates within carbohydrate degradation; glycolysis; pyruvate from D-glyceraldehyde 3-phosphate: step 3/5. Catalyzes the interconversion of 2-phosphoglycerate and 3-phosphoglycerate. The chain is 2,3-bisphosphoglycerate-independent phosphoglycerate mutase from Francisella tularensis subsp. holarctica (strain FTNF002-00 / FTA).